We begin with the raw amino-acid sequence, 287 residues long: Phosphate transport system permease protein PstA (287 aa).

The next 6 membrane-spanning stretches (helical) occupy residues 22–42, 70–90, 115–135, 138–158, 199–219, and 255–275; these read ISCI…WTLI, AFLG…PVGI, ILLS…YVMH, GHFS…PIVV, ILTG…PLLF, and LLAW…SLGA. An ABC transmembrane type-1 domain is found at 71–279; that stretch reads FLGSAIMCLL…LVSLGARALL (209 aa).

It belongs to the binding-protein-dependent transport system permease family. CysTW subfamily.

Its subcellular location is the cell inner membrane. Part of a binding-protein-dependent transport system for phosphate; probably responsible for the translocation of the substrate across the membrane. The protein is Phosphate transport system permease protein PstA (pstA) of Xylella fastidiosa (strain Temecula1 / ATCC 700964).